We begin with the raw amino-acid sequence, 167 residues long: Telethonin (167 aa).

Ser-39 carries the phosphoserine modification. The interval Val-144–Gly-167 is disordered. The segment covering Ser-157–Gly-167 has biased composition (polar residues).

As to quaternary structure, interacts with MYOZ1, MYOZ2 and MYOZ3. Interacts with CSRP3. Interacts directly with the N-terminal Ig-like domains of 2 titin (TTN) molecules. Interacts with ANKRD2; the interaction is direct. Heart and skeletal muscle.

The protein localises to the cytoplasm. The protein resides in the myofibril. It localises to the sarcomere. Muscle assembly regulating factor. Mediates the antiparallel assembly of titin (TTN) molecules at the sarcomeric Z-disk. This Homo sapiens (Human) protein is Telethonin (TCAP).